The following is a 333-amino-acid chain: Na(+)-translocating ferredoxin:NAD(+) oxidoreductase complex subunit B (333 aa).

A hydrophobic region spans residues 1–27 (MLNAILVPVGILGVFGLIFGIGLAIAA). One can recognise a 4Fe-4S domain in the interval 33–92 (YEDPRVPLVRAALPGANCGGCGLPGCDALAANIVGGSAAIDACPVGGASCAAAVAEIMGM). Cysteine 50, cysteine 53, cysteine 58, cysteine 75, cysteine 138, cysteine 142, cysteine 148, cysteine 152, cysteine 172, cysteine 175, cysteine 178, cysteine 182, cysteine 217, cysteine 220, cysteine 223, cysteine 227, cysteine 246, cysteine 249, cysteine 252, cysteine 256, cysteine 279, cysteine 282, cysteine 285, cysteine 289, cysteine 310, cysteine 313, cysteine 316, and cysteine 320 together coordinate [4Fe-4S] cluster. 4Fe-4S ferredoxin-type domains are found at residues 126–162 (REAM…IGED), 163–192 (GLPK…LVPE), 207–237 (KIAR…VENN), 239–266 (AKID…GDVE), 270–299 (STAY…GEIK), and 301–330 (PPYV…MRPN).

The protein belongs to the 4Fe4S bacterial-type ferredoxin family. RnfB subfamily. In terms of assembly, the complex is composed of six subunits: RnfA, RnfB, RnfC, RnfD, RnfE and RnfG. It depends on [4Fe-4S] cluster as a cofactor.

Its subcellular location is the cell membrane. It carries out the reaction 2 reduced [2Fe-2S]-[ferredoxin] + Na(+)(in) + NAD(+) + H(+) = 2 oxidized [2Fe-2S]-[ferredoxin] + Na(+)(out) + NADH. In terms of biological role, part of a membrane-bound complex that couples electron transfer with translocation of ions across the membrane. Couples electron transfer from reduced ferredoxin to NAD(+) with electrogenic movement of Na(+) out of the cell. Involved in caffeate respiration. The sequence is that of Na(+)-translocating ferredoxin:NAD(+) oxidoreductase complex subunit B from Acetobacterium woodii (strain ATCC 29683 / DSM 1030 / JCM 2381 / KCTC 1655 / WB1).